Consider the following 184-residue polypeptide: Cytidylate kinase (184 aa).

8–16 contacts ATP; the sequence is GQPGSGKTT.

This sequence belongs to the cytidylate kinase family. Type 2 subfamily.

It is found in the cytoplasm. The catalysed reaction is CMP + ATP = CDP + ADP. The enzyme catalyses dCMP + ATP = dCDP + ADP. The polypeptide is Cytidylate kinase (Pyrobaculum islandicum (strain DSM 4184 / JCM 9189 / GEO3)).